The primary structure comprises 101 residues: Small ribosomal subunit protein uS14 (101 aa).

Belongs to the universal ribosomal protein uS14 family. Part of the 30S ribosomal subunit. Contacts proteins S3 and S10.

In terms of biological role, binds 16S rRNA, required for the assembly of 30S particles and may also be responsible for determining the conformation of the 16S rRNA at the A site. This is Small ribosomal subunit protein uS14 from Paracoccus denitrificans (strain Pd 1222).